A 134-amino-acid polypeptide reads, in one-letter code: Phosphoribosyl-AMP cyclohydrolase (134 aa).

Asp77 is a Mg(2+) binding site. Residue Cys78 coordinates Zn(2+). Mg(2+) is bound by residues Asp79 and Asp81. The Zn(2+) site is built by Cys95 and Cys102.

The protein belongs to the PRA-CH family. As to quaternary structure, homodimer. The cofactor is Mg(2+). Requires Zn(2+) as cofactor.

It localises to the cytoplasm. It carries out the reaction 1-(5-phospho-beta-D-ribosyl)-5'-AMP + H2O = 1-(5-phospho-beta-D-ribosyl)-5-[(5-phospho-beta-D-ribosylamino)methylideneamino]imidazole-4-carboxamide. It functions in the pathway amino-acid biosynthesis; L-histidine biosynthesis; L-histidine from 5-phospho-alpha-D-ribose 1-diphosphate: step 3/9. Its function is as follows. Catalyzes the hydrolysis of the adenine ring of phosphoribosyl-AMP. The polypeptide is Phosphoribosyl-AMP cyclohydrolase (Pseudomonas aeruginosa (strain LESB58)).